The primary structure comprises 157 residues: Ciliary microtubule inner protein 5 (157 aa).

2 disordered regions span residues 1-57 (MGSR…SALG) and 92-124 (DPMGNKKEPVKLPDHVPRFSDTVPNSTNRAVGS). The span at 92 to 109 (DPMGNKKEPVKLPDHVPR) shows a compositional bias: basic and acidic residues.

Its subcellular location is the cell projection. The protein localises to the cilium. This chain is Ciliary microtubule inner protein 5 (CIMIP5), found in Bos taurus (Bovine).